Reading from the N-terminus, the 414-residue chain is 2,3-diketo-5-methylthiopentyl-1-phosphate enolase (414 aa).

Lysine 99 (proton acceptor) is an active-site residue. Residues lysine 148, 174 to 177, histidine 265, glycine 338, and 360 to 361 contribute to the substrate site; these read KDDE and GG. Residues lysine 174, aspartate 176, and glutamate 177 each coordinate Mg(2+). N6-carboxylysine is present on lysine 174.

Belongs to the RuBisCO large chain family. Type IV subfamily. Homodimer. The cofactor is Mg(2+).

It carries out the reaction 5-methylsulfanyl-2,3-dioxopentyl phosphate = 2-hydroxy-5-methylsulfanyl-3-oxopent-1-enyl phosphate. The protein operates within amino-acid biosynthesis; L-methionine biosynthesis via salvage pathway; L-methionine from S-methyl-5-thio-alpha-D-ribose 1-phosphate: step 3/6. Its function is as follows. Catalyzes the enolization of 2,3-diketo-5-methylthiopentyl-1-phosphate (DK-MTP-1-P) into 2-hydroxy-3-keto-5-methylthiopentenyl-1-phosphate (HK-MTPenyl-1-P). This is 2,3-diketo-5-methylthiopentyl-1-phosphate enolase from Bacillus thuringiensis (strain Al Hakam).